A 474-amino-acid polypeptide reads, in one-letter code: Crocetin glucosyltransferase, chloroplastic (474 aa).

A chloroplast-targeting transit peptide spans Met1–Ser45. His17 acts as the Proton acceptor in catalysis. An anthocyanidin is bound at residue His17. 8 residues coordinate UDP-alpha-D-glucose: Gln346, His361, Trp364, Asn365, Ser366, Glu369, Asp385, and Gln386.

It belongs to the UDP-glycosyltransferase family. Ubiquitous.

It localises to the plastid. Its subcellular location is the chloroplast. It catalyses the reaction crocetin + UDP-alpha-D-glucose = beta-D-glucosyl crocetin + UDP. The catalysed reaction is beta-D-glucosyl crocetin + UDP-alpha-D-glucose = bis(beta-D-glucosyl) crocetin + UDP. It carries out the reaction beta-D-gentiobiosyl crocetin + UDP-alpha-D-glucose = beta-D-gentiobiosyl beta-D-glucosyl crocetin + UDP. Glucosyltransferase acting on a broad range of substrates, including crocetin, 4-coumaric acid, caffeic acid and ferulic acid. No activity with indol-3-acetic acid, bixin and norbixin, and no formation of O-glucosides. Involved with UGT94E5 in sequential glycosylation of crocetin to crocin (bis(beta-D-gentiobiosyl) crocetin). This Gardenia jasminoides (Cape jasmine) protein is Crocetin glucosyltransferase, chloroplastic (UGT75L6).